The sequence spans 564 residues: Esterase FE4 (564 aa).

Positions 1–23 (MKNTCGILLNLFLFIGCFLTCSA) are cleaved as a signal peptide. A glycan (N-linked (GlcNAc...) asparagine) is linked at Asn81. Cys89 and Cys106 are oxidised to a cystine. Ser214 (acyl-ester intermediate) is an active-site residue. Cys266 and Cys277 are oxidised to a cystine. Asn269 is a glycosylation site (N-linked (GlcNAc...) asparagine). Residue Glu339 is the Charge relay system of the active site. N-linked (GlcNAc...) asparagine glycosylation is found at Asn371, Asn404, and Asn443. His463 functions as the Charge relay system in the catalytic mechanism.

It belongs to the type-B carboxylesterase/lipase family.

The catalysed reaction is a carboxylic ester + H2O = an alcohol + a carboxylate + H(+). Its function is as follows. Overproduction of nonspecific esterases is a common mechanism of resistance to organophosphate insecticides. The protein is Esterase FE4 of Myzus persicae (Green peach aphid).